A 387-amino-acid polypeptide reads, in one-letter code: Succinate--CoA ligase [ADP-forming] subunit beta (387 aa).

One can recognise an ATP-grasp domain in the interval 9-245 (KDLLESYGLK…KSQENAKELK (237 aa)). ATP-binding positions include Lys46, 53-55 (GRG), Glu100, Tyr103, and Glu108. Residues Asn200 and Asp214 each coordinate Mg(2+). Substrate contacts are provided by residues Asn265 and 322–324 (GIV).

It belongs to the succinate/malate CoA ligase beta subunit family. Heterotetramer of two alpha and two beta subunits. It depends on Mg(2+) as a cofactor.

The enzyme catalyses succinate + ATP + CoA = succinyl-CoA + ADP + phosphate. The catalysed reaction is GTP + succinate + CoA = succinyl-CoA + GDP + phosphate. The protein operates within carbohydrate metabolism; tricarboxylic acid cycle; succinate from succinyl-CoA (ligase route): step 1/1. Succinyl-CoA synthetase functions in the citric acid cycle (TCA), coupling the hydrolysis of succinyl-CoA to the synthesis of either ATP or GTP and thus represents the only step of substrate-level phosphorylation in the TCA. The beta subunit provides nucleotide specificity of the enzyme and binds the substrate succinate, while the binding sites for coenzyme A and phosphate are found in the alpha subunit. This is Succinate--CoA ligase [ADP-forming] subunit beta from Francisella tularensis subsp. mediasiatica (strain FSC147).